The chain runs to 239 residues: LexA repressor (239 aa).

Residues 1–40 (MTEAATGPEGADPSRAARSLPGRPPGIRADSSGLTDRQRR) are disordered. The H-T-H motif DNA-binding region spans 58-78 (MREIGQAVGLSSTSSVAHQLM). Residues 89-100 (DPHRPRAYEVRG) show a composition bias toward basic and acidic residues. The tract at residues 89–116 (DPHRPRAYEVRGSDQPSAQPADTSGKPA) is disordered. Residues Ser-163 and Lys-200 each act as for autocatalytic cleavage activity in the active site.

Belongs to the peptidase S24 family. Homodimer.

The enzyme catalyses Hydrolysis of Ala-|-Gly bond in repressor LexA.. Functionally, represses a number of genes involved in the response to DNA damage (SOS response), including recA and lexA. In the presence of single-stranded DNA, RecA interacts with LexA causing an autocatalytic cleavage which disrupts the DNA-binding part of LexA, leading to derepression of the SOS regulon and eventually DNA repair. In Streptomyces clavuligerus, this protein is LexA repressor.